A 129-amino-acid chain; its full sequence is Small ribosomal subunit protein uS11 (129 aa).

This sequence belongs to the universal ribosomal protein uS11 family. As to quaternary structure, part of the 30S ribosomal subunit. Interacts with proteins S7 and S18. Binds to IF-3.

In terms of biological role, located on the platform of the 30S subunit, it bridges several disparate RNA helices of the 16S rRNA. Forms part of the Shine-Dalgarno cleft in the 70S ribosome. The protein is Small ribosomal subunit protein uS11 of Psychromonas ingrahamii (strain DSM 17664 / CCUG 51855 / 37).